The primary structure comprises 434 residues: D-amino acid dehydrogenase (434 aa).

V3 to W17 is an FAD binding site.

The protein belongs to the DadA oxidoreductase family. FAD is required as a cofactor.

The enzyme catalyses a D-alpha-amino acid + A + H2O = a 2-oxocarboxylate + AH2 + NH4(+). Its pathway is amino-acid degradation; D-alanine degradation; NH(3) and pyruvate from D-alanine: step 1/1. Its function is as follows. Oxidative deamination of D-amino acids. The polypeptide is D-amino acid dehydrogenase (Serratia proteamaculans (strain 568)).